Reading from the N-terminus, the 398-residue chain is MASTIDIAAIREAQRRQGPATILAIGTATPSNCVYQADYPDYYFRITKSEHMVDLKEKFKRMCDKSMIRKRYMHLTEEYLKENPSLCEYMAPSLDARQDVVVVEVPKLGKEAATKAIKEWGQPKSKITHLIFCTTSGVDMPGADYQLTKLLGLRPSVKRFMMYQQGCFAGGTVLRLAKDLAENNKGARVLVVCSEITAVTFRGPNDTHLDSLVGQALFGDGAAAVIVGADPDLTTERPLFEMISAAQTILPDSEGAIDGHLREVGLTFHLLKDVPGLISKNIEKALTQAFSPLGITDWNSIFWIAHPGGPAILDQVELKLGLKEEKMRATRHVLSEYGNMSSACVLFIIDEMRKKSAEDGAATTGEGLDWGVLFGFGPGLTVETVVLHSLPTTMAIAT.

C167 is a catalytic residue.

It belongs to the thiolase-like superfamily. Chalcone/stilbene synthases family.

It catalyses the reaction (E)-4-coumaroyl-CoA + 3 malonyl-CoA + 3 H(+) = 2',4,4',6'-tetrahydroxychalcone + 3 CO2 + 4 CoA. The protein operates within secondary metabolite biosynthesis; flavonoid biosynthesis. In terms of biological role, the primary product of this enzyme is 4,2',4',6'-tetrahydroxychalcone (also termed naringenin-chalcone or chalcone) which can under specific conditions spontaneously isomerize into naringenin. This is Chalcone synthase (CHS) from Callistephus chinensis (China aster).